We begin with the raw amino-acid sequence, 352 residues long: Quinolinate synthase (352 aa).

Iminosuccinate is bound by residues His-48 and Ser-69. Residue Cys-114 coordinates [4Fe-4S] cluster. Iminosuccinate is bound by residues 140–142 (YAN) and Ser-157. Cys-201 is a binding site for [4Fe-4S] cluster. Residues 227 to 229 (HPE) and Thr-244 each bind iminosuccinate. Cys-298 is a binding site for [4Fe-4S] cluster.

Belongs to the quinolinate synthase family. Type 1 subfamily. The cofactor is [4Fe-4S] cluster.

It is found in the cytoplasm. The enzyme catalyses iminosuccinate + dihydroxyacetone phosphate = quinolinate + phosphate + 2 H2O + H(+). The protein operates within cofactor biosynthesis; NAD(+) biosynthesis; quinolinate from iminoaspartate: step 1/1. Functionally, catalyzes the condensation of iminoaspartate with dihydroxyacetone phosphate to form quinolinate. This Pseudomonas putida (strain GB-1) protein is Quinolinate synthase.